The primary structure comprises 151 residues: 3-dehydroquinate dehydratase 1 (151 aa).

The active-site Proton acceptor is Y24. Substrate contacts are provided by N75, H81, and D88. The active-site Proton donor is H101. Substrate contacts are provided by residues 102–103 (IS) and R112.

This sequence belongs to the type-II 3-dehydroquinase family. Homododecamer.

It catalyses the reaction 3-dehydroquinate = 3-dehydroshikimate + H2O. The protein operates within metabolic intermediate biosynthesis; chorismate biosynthesis; chorismate from D-erythrose 4-phosphate and phosphoenolpyruvate: step 3/7. Catalyzes a trans-dehydration via an enolate intermediate. The polypeptide is 3-dehydroquinate dehydratase 1 (aroQ1) (Corynebacterium efficiens (strain DSM 44549 / YS-314 / AJ 12310 / JCM 11189 / NBRC 100395)).